The chain runs to 264 residues: Thymidylate synthase (264 aa).

Position 21 (Arg21) interacts with dUMP. His51 is a binding site for (6R)-5,10-methylene-5,6,7,8-tetrahydrofolate. Arg126–Arg127 is a dUMP binding site. Cys146 serves as the catalytic Nucleophile. DUMP is bound by residues Arg166–Asp169, Asn177, and His207–Tyr209. Position 169 (Asp169) interacts with (6R)-5,10-methylene-5,6,7,8-tetrahydrofolate. Ala263 contacts (6R)-5,10-methylene-5,6,7,8-tetrahydrofolate.

The protein belongs to the thymidylate synthase family. Bacterial-type ThyA subfamily. As to quaternary structure, homodimer.

The protein resides in the cytoplasm. The enzyme catalyses dUMP + (6R)-5,10-methylene-5,6,7,8-tetrahydrofolate = 7,8-dihydrofolate + dTMP. It participates in pyrimidine metabolism; dTTP biosynthesis. Functionally, catalyzes the reductive methylation of 2'-deoxyuridine-5'-monophosphate (dUMP) to 2'-deoxythymidine-5'-monophosphate (dTMP) while utilizing 5,10-methylenetetrahydrofolate (mTHF) as the methyl donor and reductant in the reaction, yielding dihydrofolate (DHF) as a by-product. This enzymatic reaction provides an intracellular de novo source of dTMP, an essential precursor for DNA biosynthesis. This is Thymidylate synthase from Agrobacterium fabrum (strain C58 / ATCC 33970) (Agrobacterium tumefaciens (strain C58)).